Consider the following 481-residue polypeptide: Probable myosin light chain kinase DDB_G0284661 (481 aa).

In terms of domain architecture, Protein kinase spans 13 to 269 (YNITDIIGEG…VKQSLAHKWI (257 aa)). ATP-binding positions include 19–27 (IGEGTFSTV) and Lys-43. The active-site Proton acceptor is Asp-136. Disordered regions lie at residues 285–315 (PLIT…PSLK) and 345–427 (SNSH…DDDE). Residues 379 to 421 (SNNNINNNNDNNDNNNSNSNNSNNNINNFINNNNNNNNNNSNF) show a composition bias toward low complexity.

The protein belongs to the protein kinase superfamily. CAMK Ser/Thr protein kinase family. CaMK subfamily.

The catalysed reaction is L-seryl-[myosin light chain] + ATP = O-phospho-L-seryl-[myosin light chain] + ADP + H(+). It catalyses the reaction L-threonyl-[myosin light chain] + ATP = O-phospho-L-threonyl-[myosin light chain] + ADP + H(+). Does not have a calmodulin-binding domain. In terms of biological role, may phosphorylate a specific serine in the N-terminus of a myosin light chain. The chain is Probable myosin light chain kinase DDB_G0284661 from Dictyostelium discoideum (Social amoeba).